Here is a 559-residue protein sequence, read N- to C-terminus: Polypeptide N-acetylgalactosaminyltransferase 1 (559 aa).

Over 1-8 (MRKFAYCK) the chain is Cytoplasmic. The helical; Signal-anchor for type II membrane protein transmembrane segment at 9–28 (VVLATSLIWVLLDMFLLLYF) threads the bilayer. Over 29–559 (SECNKCDEKK…LRNVTLPEIF (531 aa)) the chain is Lumenal. The segment at 45–65 (GDVLEPVQKPHEGPGEMGKPV) is disordered. Residue N95 is glycosylated (N-linked (GlcNAc...) asparagine). 5 cysteine pairs are disulfide-bonded: C106–C339, C330–C408, C442–C459, C482–C497, and C523–C540. Residues 115-225 (LPTTSVVIVF…VGWLEPLLAR (111 aa)) are catalytic subdomain A. Substrate contacts are provided by D156 and R186. 2 residues coordinate Mn(2+): D209 and H211. Positions 285–347 (PVRTPTMAGG…TCSHVGHVFR (63 aa)) are catalytic subdomain B. W316 provides a ligand contact to substrate. H344 contacts Mn(2+). The substrate site is built by R347 and Y352. One can recognise a Ricin B-type lectin domain in the interval 429–551 (FSLGEIRNVE…GSRSQQWLLR (123 aa)). N-linked (GlcNAc...) asparagine glycosylation occurs at N552.

The protein belongs to the glycosyltransferase 2 family. GalNAc-T subfamily. Requires Mn(2+) as cofactor. In terms of tissue distribution, widely expressed. Expressed in all tissues tested.

It localises to the golgi apparatus. It is found in the golgi stack membrane. The protein localises to the secreted. It carries out the reaction L-seryl-[protein] + UDP-N-acetyl-alpha-D-galactosamine = a 3-O-[N-acetyl-alpha-D-galactosaminyl]-L-seryl-[protein] + UDP + H(+). The enzyme catalyses L-threonyl-[protein] + UDP-N-acetyl-alpha-D-galactosamine = a 3-O-[N-acetyl-alpha-D-galactosaminyl]-L-threonyl-[protein] + UDP + H(+). Its pathway is protein modification; protein glycosylation. Functionally, catalyzes the initial reaction in O-linked oligosaccharide biosynthesis, the transfer of an N-acetyl-D-galactosamine residue to a serine or threonine residue on the protein receptor. Has a broad spectrum of substrates such as apomucin-, MUC5AC-, MUC1- and MUC2-derived peptides. This Homo sapiens (Human) protein is Polypeptide N-acetylgalactosaminyltransferase 1.